The following is an 809-amino-acid chain: Acyl-homoserine lactone acylase QuiP (809 aa).

The signal sequence occupies residues 1-26 (MASPAFSHFLPRFGVAAAVASALSLA). S261 (nucleophile) is an active-site residue.

Belongs to the peptidase S45 family. As to quaternary structure, heterodimer of an alpha subunit and a beta subunit processed from the same precursor.

It localises to the periplasm. It carries out the reaction an N-acyl-L-homoserine lactone + H2O = L-homoserine lactone + a carboxylate. Catalyzes the deacylation of acyl-homoserine lactone (AHL or acyl-HSL), releasing homoserine lactone (HSL) and the corresponding fatty acid. Possesses a specificity for the degradation of long-chain acyl-HSLs (side chains of seven or more carbons in length). The sequence is that of Acyl-homoserine lactone acylase QuiP (quiP) from Pseudomonas fluorescens (strain ATCC BAA-477 / NRRL B-23932 / Pf-5).